We begin with the raw amino-acid sequence, 187 residues long: High-affinity copper transporter ctrA2 (187 aa).

The next 2 membrane-spanning stretches (helical) occupy residues 44–64 and 137–157; these read YAGT…LVAF and AAIF…VMTM.

The protein belongs to the copper transporter (Ctr) (TC 1.A.56) family. SLC31A subfamily.

The protein localises to the cell membrane. The catalysed reaction is Cu(2+)(in) = Cu(2+)(out). In terms of biological role, high-affinity copper transporter of plasma membrane that mediates copper uptake under low copper conditions. The mechanism driving the transmembrane transport of copper has still to be determined. Acts as a potential virulence factor. The polypeptide is High-affinity copper transporter ctrA2 (Aspergillus fumigatus (strain ATCC MYA-4609 / CBS 101355 / FGSC A1100 / Af293) (Neosartorya fumigata)).